The sequence spans 140 residues: uncharacterized protein (140 aa).

Belongs to the peptidase S24 family.

This is an uncharacterized protein from Haemophilus influenzae (strain ATCC 51907 / DSM 11121 / KW20 / Rd).